The primary structure comprises 372 residues: 4-hydroxy-3-methylbut-2-en-1-yl diphosphate synthase (flavodoxin) (372 aa).

4 residues coordinate [4Fe-4S] cluster: Cys270, Cys273, Cys305, and Glu312.

The protein belongs to the IspG family. [4Fe-4S] cluster serves as cofactor.

The catalysed reaction is (2E)-4-hydroxy-3-methylbut-2-enyl diphosphate + oxidized [flavodoxin] + H2O + 2 H(+) = 2-C-methyl-D-erythritol 2,4-cyclic diphosphate + reduced [flavodoxin]. Its pathway is isoprenoid biosynthesis; isopentenyl diphosphate biosynthesis via DXP pathway; isopentenyl diphosphate from 1-deoxy-D-xylulose 5-phosphate: step 5/6. In terms of biological role, converts 2C-methyl-D-erythritol 2,4-cyclodiphosphate (ME-2,4cPP) into 1-hydroxy-2-methyl-2-(E)-butenyl 4-diphosphate. This Shigella dysenteriae serotype 1 (strain Sd197) protein is 4-hydroxy-3-methylbut-2-en-1-yl diphosphate synthase (flavodoxin).